A 627-amino-acid chain; its full sequence is Zinc cluster transcription factor acuM (627 aa).

6 disordered regions span residues 1–40 (MGCR…PARP), 129–148 (NGTA…GTME), 155–193 (AEGD…RRKV), 225–258 (CHDE…FSNA), 277–305 (PDGT…QNSL), and 394–416 (AQPS…PSST). Residues 162–171 (MESGSKNTAS) show a composition bias toward polar residues. A DNA-binding region (zn(2)-C6 fungal-type) is located at residues 197 to 225 (CVYCRRSHMTCDSERPCTRCIKRNIGHLC). The span at 225–251 (CHDEPREPSKRARSEHEHSTAEEDGHS) shows a compositional bias: basic and acidic residues. Positions 286–305 (SSVSAVQHNTIPSSSAQNSL) are enriched in polar residues. The segment covering 394-403 (AQPSQPTQSQ) has biased composition (low complexity). Residues 404 to 416 (PHQNDSVQGPSST) are compositionally biased toward polar residues.

It is found in the nucleus. In terms of biological role, transcription factor that governs genes involved in reductive and siderophore-mediated iron acquisition, and carbon metabolism. Suppresses the expression of sreA and induces hapX to stimulate expression of genes involved in both reductive iron assimilation and siderophore-mediated iron uptake which is essential for the maximal virulence. Also regulates genes involved in gluconeogenesis. In Aspergillus fumigatus (strain ATCC MYA-4609 / CBS 101355 / FGSC A1100 / Af293) (Neosartorya fumigata), this protein is Zinc cluster transcription factor acuM.